The primary structure comprises 675 residues: DNA gyrase subunit B (675 aa).

A Toprim domain is found at 453–567 (SELYVVEGDS…NGHIFLAQPP (115 aa)). E459, D532, and D534 together coordinate Mg(2+).

Belongs to the type II topoisomerase GyrB family. In terms of assembly, heterotetramer, composed of two GyrA and two GyrB chains. In the heterotetramer, GyrA contains the active site tyrosine that forms a transient covalent intermediate with DNA, while GyrB binds cofactors and catalyzes ATP hydrolysis. The cofactor is Mg(2+). Mn(2+) is required as a cofactor. Requires Ca(2+) as cofactor.

It is found in the cytoplasm. The catalysed reaction is ATP-dependent breakage, passage and rejoining of double-stranded DNA.. Its activity is regulated as follows. Inhibited by 4-quinoline drugs (nalidixic acid, ciprofloxacin, ofloxacin), although it is much less sensitive than the corresponding enzyme from E.coli. GyrB intrinsic ATPase activity inhibited by aminopyrazinamide and pyrrolamide derivatives. Functionally, a type II topoisomerase that negatively supercoils closed circular double-stranded (ds) DNA in an ATP-dependent manner to modulate DNA topology and maintain chromosomes in an underwound state. Negative supercoiling favors strand separation, and DNA replication, transcription, recombination and repair, all of which involve strand separation. Also able to catalyze the interconversion of other topological isomers of dsDNA rings, including catenanes and knotted rings. Type II topoisomerases break and join 2 DNA strands simultaneously in an ATP-dependent manner. The protein is DNA gyrase subunit B of Mycolicibacterium smegmatis (strain ATCC 700084 / mc(2)155) (Mycobacterium smegmatis).